The following is a 335-amino-acid chain: tRNA N6-adenosine threonylcarbamoyltransferase (335 aa).

2 residues coordinate Fe cation: His-111 and His-115. Residues 133 to 137, Asp-166, Gly-179, and Asn-276 each bind substrate; that span reads LISGG. Fe cation is bound at residue Asp-301.

The protein belongs to the KAE1 / TsaD family. Fe(2+) serves as cofactor.

It localises to the cytoplasm. The catalysed reaction is L-threonylcarbamoyladenylate + adenosine(37) in tRNA = N(6)-L-threonylcarbamoyladenosine(37) in tRNA + AMP + H(+). Its function is as follows. Required for the formation of a threonylcarbamoyl group on adenosine at position 37 (t(6)A37) in tRNAs that read codons beginning with adenine. Is involved in the transfer of the threonylcarbamoyl moiety of threonylcarbamoyl-AMP (TC-AMP) to the N6 group of A37, together with TsaE and TsaB. TsaD likely plays a direct catalytic role in this reaction. In Wolbachia sp. subsp. Brugia malayi (strain TRS), this protein is tRNA N6-adenosine threonylcarbamoyltransferase.